The sequence spans 248 residues: Glycoprotein BILF2 (248 aa).

The signal sequence occupies residues 1–17 (MTHLVLLLCCCVGSVCA). The Ig-like domain maps to 19–125 (FSDLVKFENV…NVTLRNCSVA (107 aa)). 12 N-linked (GlcNAc...) asparagine; by host glycosylation sites follow: Asn-27, Asn-37, Asn-45, Asn-73, Asn-83, Asn-92, Asn-95, Asn-104, Asn-116, Asn-121, Asn-131, and Asn-144. The cysteines at positions 40 and 115 are disulfide-linked. The interval 167 to 191 (VSHTTSTSHRPHRRPVSKRPTHKPV) is disordered. Positions 175–188 (HRPHRRPVSKRPTH) are enriched in basic residues. A helical membrane pass occupies residues 210-230 (WALLLITCAVVAPVLLIIIIS).

Belongs to the Epstein-Barr virus BILF2 protein family.

It is found in the membrane. This chain is Glycoprotein BILF2, found in Epstein-Barr virus (strain B95-8) (HHV-4).